The primary structure comprises 351 residues: Foldase protein PrsA 1 (351 aa).

Residues 1 to 22 form the signal peptide; sequence MKNSNKLIASVVTLASVMALAA. C23 carries N-palmitoyl cysteine lipidation. The S-diacylglycerol cysteine moiety is linked to residue C23. One can recognise a PpiC domain in the interval 145 to 240; it reads TPTMAVEMIT…KKFYIVKVTK (96 aa). Low complexity-rich tracts occupy residues 303–317 and 326–351; these read KTKA…SESS and ESEQ…PAAQ. Residues 303–351 are disordered; that stretch reads KTKAASESSTTSESSKAAEENPSESEQTQTSSAEEPTETEAQTQEPAAQ.

Belongs to the PrsA family.

Its subcellular location is the cell membrane. It catalyses the reaction [protein]-peptidylproline (omega=180) = [protein]-peptidylproline (omega=0). Functionally, plays a major role in protein secretion by helping the post-translocational extracellular folding of several secreted proteins. The protein is Foldase protein PrsA 1 (prsA1) of Streptococcus pyogenes serotype M18 (strain MGAS8232).